The following is a 271-amino-acid chain: ABC transporter I family member 10 (271 aa).

Residues 40 to 267 (VECRNLCFSV…IKAKQSSYID (228 aa)) form the ABC transporter domain. ATP is bound at residue 77-84 (GPNGCGKS).

The protein belongs to the ABC transporter superfamily. ABCI family.

This is ABC transporter I family member 10 (ABCI10) from Arabidopsis thaliana (Mouse-ear cress).